Reading from the N-terminus, the 409-residue chain is Arginine deiminase (409 aa).

Cysteine 399 (amidino-cysteine intermediate) is an active-site residue.

This sequence belongs to the arginine deiminase family.

It is found in the cytoplasm. It carries out the reaction L-arginine + H2O = L-citrulline + NH4(+). It participates in amino-acid degradation; L-arginine degradation via ADI pathway; carbamoyl phosphate from L-arginine: step 1/2. This Borrelia garinii subsp. bavariensis (strain ATCC BAA-2496 / DSM 23469 / PBi) (Borreliella bavariensis) protein is Arginine deiminase.